The following is a 330-amino-acid chain: ADP-L-glycero-D-manno-heptose-6-epimerase (330 aa).

NADP(+)-binding positions include 11–12 (FI), 32–33 (DN), lysine 39, lysine 54, 75–79 (EGACS), and asparagine 92. The Proton acceptor role is filled by tyrosine 139. Lysine 143 contributes to the NADP(+) binding site. Residue asparagine 168 coordinates substrate. NADP(+) contacts are provided by valine 169 and lysine 177. Lysine 177 (proton acceptor) is an active-site residue. Substrate is bound by residues arginine 179, histidine 186, 200 to 203 (FGEY), arginine 213, and tyrosine 292.

The protein belongs to the NAD(P)-dependent epimerase/dehydratase family. HldD subfamily. As to quaternary structure, homopentamer. It depends on NADP(+) as a cofactor.

The catalysed reaction is ADP-D-glycero-beta-D-manno-heptose = ADP-L-glycero-beta-D-manno-heptose. It participates in nucleotide-sugar biosynthesis; ADP-L-glycero-beta-D-manno-heptose biosynthesis; ADP-L-glycero-beta-D-manno-heptose from D-glycero-beta-D-manno-heptose 7-phosphate: step 4/4. Functionally, catalyzes the interconversion between ADP-D-glycero-beta-D-manno-heptose and ADP-L-glycero-beta-D-manno-heptose via an epimerization at carbon 6 of the heptose. The polypeptide is ADP-L-glycero-D-manno-heptose-6-epimerase (Burkholderia thailandensis (strain ATCC 700388 / DSM 13276 / CCUG 48851 / CIP 106301 / E264)).